Reading from the N-terminus, the 1030-residue chain is Leucine-rich repeat and coiled-coil domain-containing protein 1 (1030 aa).

LRR repeat units lie at residues 7–28 (RNRE…CLNS), 29–50 (NLYS…RHLC), 51–72 (YLQH…DSLA), 73–94 (SLQS…EKLF), 95–116 (NLKK…IPLH), and 121–142 (KLSH…LQST). Positions 160-200 (NPVCHALGYREIILENLPQLNSLDGLDRSGDPVTAHEVDSM) constitute an LRRCT domain. The disordered stretch occupies residues 298–401 (KSEQTKLKAK…GQILGKPHAI (104 aa)). Over residues 300-311 (EQTKLKAKRDTD) the composition is skewed to basic and acidic residues. Composition is skewed to polar residues over residues 338 to 368 (KTSQ…SRKQ) and 378 to 393 (ETSL…STGQ). Positions 432-645 (RERRWKAEQV…DLEDEFRAAL (214 aa)) form a coiled coil.

This sequence belongs to the LRRCC1 family.

It localises to the cytoplasm. It is found in the cytoskeleton. The protein localises to the microtubule organizing center. Its subcellular location is the centrosome. The protein resides in the centriole. Required for the organization of the mitotic spindle. Maintains the structural integrity of centrosomes during mitosis. This Xenopus laevis (African clawed frog) protein is Leucine-rich repeat and coiled-coil domain-containing protein 1 (lrrcc1).